We begin with the raw amino-acid sequence, 285 residues long: tRNA U34 carboxymethyltransferase (285 aa).

Carboxy-S-adenosyl-L-methionine contacts are provided by residues lysine 56, tryptophan 70, lysine 75, glycine 94, 143 to 144 (VE), tyrosine 163, and arginine 278.

The protein belongs to the class I-like SAM-binding methyltransferase superfamily. CmoB family. Homotetramer.

The enzyme catalyses carboxy-S-adenosyl-L-methionine + 5-hydroxyuridine(34) in tRNA = 5-carboxymethoxyuridine(34) in tRNA + S-adenosyl-L-homocysteine + H(+). Functionally, catalyzes carboxymethyl transfer from carboxy-S-adenosyl-L-methionine (Cx-SAM) to 5-hydroxyuridine (ho5U) to form 5-carboxymethoxyuridine (cmo5U) at position 34 in tRNAs. The protein is tRNA U34 carboxymethyltransferase of Campylobacter hominis (strain ATCC BAA-381 / DSM 21671 / CCUG 45161 / LMG 19568 / NCTC 13146 / CH001A).